We begin with the raw amino-acid sequence, 227 residues long: UPF0173 metal-dependent hydrolase BCAH820_4729 (227 aa).

The protein belongs to the UPF0173 family.

This chain is UPF0173 metal-dependent hydrolase BCAH820_4729, found in Bacillus cereus (strain AH820).